Reading from the N-terminus, the 227-residue chain is Urease subunit gamma/beta (227 aa).

Positions 1–101 are urease gamma; sequence MRLTPTERDR…LAVVTDPIGG (101 aa). The interval 102-227 is urease beta; it reads GLGDQAPGAL…ACGYLGVEQR (126 aa).

It in the N-terminal section; belongs to the urease gamma subunit family. In the C-terminal section; belongs to the urease beta subunit family. As to quaternary structure, heterohexamer of 3 UreC (alpha) and 3 UreAB (gamma/beta) subunits.

The protein localises to the cytoplasm. The catalysed reaction is urea + 2 H2O + H(+) = hydrogencarbonate + 2 NH4(+). The protein operates within nitrogen metabolism; urea degradation; CO(2) and NH(3) from urea (urease route): step 1/1. The chain is Urease subunit gamma/beta from Streptomyces avermitilis (strain ATCC 31267 / DSM 46492 / JCM 5070 / NBRC 14893 / NCIMB 12804 / NRRL 8165 / MA-4680).